Here is a 1203-residue protein sequence, read N- to C-terminus: Transmembrane channel-like protein 2 (1203 aa).

Disordered stretches follow at residues 1-39 and 64-90; these read MPKS…IDSR and PHTR…EASK. A compositionally biased stretch (acidic residues) spans 73 to 86; that stretch reads FDDDDDEFDEEDDK. Residues 191 to 213 form a helical membrane-spanning segment; it reads VLGVNITITFIMCMFVVIPEWLA. Residue Asn-225 is glycosylated (N-linked (GlcNAc...) asparagine). The next 6 membrane-spanning stretches (helical) occupy residues 276–298, 369–391, 406–428, 441–463, 665–687, and 714–736; these read YRVP…FIIL, FVAR…WAIM, ATAI…LGKI, LGRV…MLQL, MIWL…LIIL, and FFFA…VIAS. Asn-748 carries an N-linked (GlcNAc...) asparagine glycan. A helical membrane pass occupies residues 780–802; that stretch reads IIIPVLVLLSLVIYFLIAMVTGL. 4 disordered regions span residues 826 to 908, 927 to 1039, 1059 to 1087, and 1112 to 1203; these read ELAG…SLPP, KYGR…IEKQ, ATVE…HEPL, and NDET…SDND. The segment covering 865–874 has biased composition (polar residues); sequence NRSTAKSVSG. Residues 898-908 are compositionally biased toward low complexity; sequence DSESTTSSLPP. Over residues 927 to 945 the composition is skewed to basic and acidic residues; that stretch reads KYGRHDDIEMEEGGGRLRE. Composition is skewed to low complexity over residues 973-997 and 1022-1035; these read QSFD…PSNS and SASS…PSSS. Over residues 1061-1076 the composition is skewed to polar residues; it reads VENSSQDPTRPPSTDD. Composition is skewed to basic and acidic residues over residues 1133–1147 and 1172–1203; these read SPRE…KDQQ and PPSE…SDND.

It belongs to the TMC family.

Its subcellular location is the membrane. Its function is as follows. Probable ion channel. The polypeptide is Transmembrane channel-like protein 2 (tmc-2) (Caenorhabditis elegans).